A 126-amino-acid polypeptide reads, in one-letter code: Fluoride-specific ion channel FluC (126 aa).

The next 4 membrane-spanning stretches (helical) occupy residues 3–23 (MILA…LTGV), 39–59 (TVNV…AHVW), 71–91 (VGVL…ALLV), and 101–121 (AYVA…LALI). Na(+)-binding residues include glycine 75 and threonine 78.

It belongs to the fluoride channel Fluc/FEX (TC 1.A.43) family.

It is found in the cell inner membrane. It carries out the reaction fluoride(in) = fluoride(out). Its activity is regulated as follows. Na(+) is not transported, but it plays an essential structural role and its presence is essential for fluoride channel function. Its function is as follows. Fluoride-specific ion channel. Important for reducing fluoride concentration in the cell, thus reducing its toxicity. The sequence is that of Fluoride-specific ion channel FluC from Rhodospirillum centenum (strain ATCC 51521 / SW).